A 159-amino-acid polypeptide reads, in one-letter code: Transcription elongation factor GreA (159 aa).

Positions Ser-44–Ile-75 form a coiled coil.

It belongs to the GreA/GreB family.

Functionally, necessary for efficient RNA polymerase transcription elongation past template-encoded arresting sites. The arresting sites in DNA have the property of trapping a certain fraction of elongating RNA polymerases that pass through, resulting in locked ternary complexes. Cleavage of the nascent transcript by cleavage factors such as GreA or GreB allows the resumption of elongation from the new 3'terminus. GreA releases sequences of 2 to 3 nucleotides. The sequence is that of Transcription elongation factor GreA from Chlorobium limicola (strain DSM 245 / NBRC 103803 / 6330).